The chain runs to 335 residues: Aliphatic sulfonates import ATP-binding protein SsuB (335 aa).

The ABC transporter domain maps to 74–293 (VRLTRVSKRY…ARASAAFAAL (220 aa)). 106 to 113 (GRSGCGKS) serves as a coordination point for ATP. Positions 308–335 (APAAPNAAGPEGASRGRAAPASGLRWAV) are disordered.

Belongs to the ABC transporter superfamily. Aliphatic sulfonates importer (TC 3.A.1.17.2) family. In terms of assembly, the complex is composed of two ATP-binding proteins (SsuB), two transmembrane proteins (SsuC) and a solute-binding protein (SsuA).

Its subcellular location is the cell inner membrane. It carries out the reaction ATP + H2O + aliphatic sulfonate-[sulfonate-binding protein]Side 1 = ADP + phosphate + aliphatic sulfonateSide 2 + [sulfonate-binding protein]Side 1.. Its function is as follows. Part of the ABC transporter complex SsuABC involved in aliphatic sulfonates import. Responsible for energy coupling to the transport system. This is Aliphatic sulfonates import ATP-binding protein SsuB from Burkholderia mallei (strain ATCC 23344).